Reading from the N-terminus, the 401-residue chain is Homoserine O-acetyltransferase (401 aa).

Residues 37–358 (NAVLVCHALT…HGHDAFLVEP (322 aa)) form the AB hydrolase-1 domain. Residue S146 is the Nucleophile of the active site. R215 contacts substrate. Residues D318 and H351 contribute to the active site. Residue D352 participates in substrate binding.

The protein belongs to the AB hydrolase superfamily. MetX family. Homodimer.

It localises to the cytoplasm. The catalysed reaction is L-homoserine + acetyl-CoA = O-acetyl-L-homoserine + CoA. Its pathway is amino-acid biosynthesis; L-methionine biosynthesis via de novo pathway; O-acetyl-L-homoserine from L-homoserine: step 1/1. Functionally, transfers an acetyl group from acetyl-CoA to L-homoserine, forming acetyl-L-homoserine. In Natronomonas pharaonis (strain ATCC 35678 / DSM 2160 / CIP 103997 / JCM 8858 / NBRC 14720 / NCIMB 2260 / Gabara) (Halobacterium pharaonis), this protein is Homoserine O-acetyltransferase.